The sequence spans 719 residues: Polyribonucleotide nucleotidyltransferase (719 aa).

2 residues coordinate Mg(2+): Asp491 and Asp497. Residues 558-617 (PRMLTIKINPEKIRDVIGKGGATIRALTEETGTQIDISDDGTIVIASVDETQAKEAQRRI) enclose the KH domain. Positions 627-695 (GQIYDGSVLR…DKGRLRLSIK (69 aa)) constitute an S1 motif domain.

Belongs to the polyribonucleotide nucleotidyltransferase family. It depends on Mg(2+) as a cofactor.

The protein resides in the cytoplasm. The catalysed reaction is RNA(n+1) + phosphate = RNA(n) + a ribonucleoside 5'-diphosphate. Functionally, involved in mRNA degradation. Catalyzes the phosphorolysis of single-stranded polyribonucleotides processively in the 3'- to 5'-direction. This chain is Polyribonucleotide nucleotidyltransferase, found in Bordetella parapertussis (strain 12822 / ATCC BAA-587 / NCTC 13253).